A 274-amino-acid polypeptide reads, in one-letter code: NH(3)-dependent NAD(+) synthetase (274 aa).

27–34 (GLSGGIDS) is an ATP binding site. Asp-33 lines the Mg(2+) pocket. Residue Arg-121 coordinates deamido-NAD(+). Thr-141 contributes to the ATP binding site. Residue Glu-146 participates in Mg(2+) binding. 2 residues coordinate ATP: Lys-170 and Ser-192.

It belongs to the NAD synthetase family. In terms of assembly, homodimer.

The enzyme catalyses deamido-NAD(+) + NH4(+) + ATP = AMP + diphosphate + NAD(+) + H(+). Its pathway is cofactor biosynthesis; NAD(+) biosynthesis; NAD(+) from deamido-NAD(+) (ammonia route): step 1/1. Catalyzes the ATP-dependent amidation of deamido-NAD to form NAD. Uses ammonia as a nitrogen source. This Helicobacter hepaticus (strain ATCC 51449 / 3B1) protein is NH(3)-dependent NAD(+) synthetase.